Reading from the N-terminus, the 328-residue chain is MRSRQRGAALLVVLLILALMVTIAAVITERTGKAFLRTESHLSRQQAKWYALGAETLSGQILQRDARNMPGRTFAGQNWSQPGLRFPVDGGEITGQISDARTCFNVNAINQGVDNESTLVKTPYPAQVFRLLLKNLGEETDRAEKITAAVRDWIDADNYPSANGAEDDVYAALPVPYRTANQRMSEISELRSVYGIDSDLYRRLLPYVCALPVDAMSININTLTEFDAPLLSAVFLNEMTMSQAKALVQQRPRMGWASLEVLQQTGLLPPNSKNTAQRVLAVKSEWFFVKLQVRVGDSDFHQRSLLHLSGQKVQVVQRQYGGYRTVNP.

A propeptide spans 1 to 7 (MRSRQRG) (leader sequence). A helical membrane pass occupies residues 8-28 (AALLVVLLILALMVTIAAVIT). The Periplasmic segment spans residues 29–328 (ERTGKAFLRT…QYGGYRTVNP (300 aa)).

The protein belongs to the GSP K family. Type II secretion is composed of four main components: the outer membrane complex, the inner membrane complex, the cytoplasmic secretion ATPase and the periplasm-spanning pseudopilus. Interacts with core component OutG. Post-translationally, cleaved by prepilin peptidase.

The protein localises to the cell inner membrane. In terms of biological role, component of the type II secretion system required for the energy-dependent secretion of extracellular factors such as proteases and toxins from the periplasm. Plays a role in pseudopilus assembly and seems to control its length. Interacts with the pseudopilus tip complex that is critical for the recognition and binding of secretion substrates. In Pectobacterium carotovorum subsp. carotovorum (Erwinia carotovora subsp. carotovora), this protein is Type II secretion system protein K (outK).